Consider the following 1207-residue polypeptide: DNA-directed RNA polymerase subunit beta' (1207 aa).

The Zn(2+) site is built by cysteine 60, cysteine 62, cysteine 75, and cysteine 78. Mg(2+) contacts are provided by aspartate 449, aspartate 451, and aspartate 453. 4 residues coordinate Zn(2+): cysteine 822, cysteine 896, cysteine 903, and cysteine 906.

This sequence belongs to the RNA polymerase beta' chain family. The RNAP catalytic core consists of 2 alpha, 1 beta, 1 beta' and 1 omega subunit. When a sigma factor is associated with the core the holoenzyme is formed, which can initiate transcription. Requires Mg(2+) as cofactor. Zn(2+) serves as cofactor.

It carries out the reaction RNA(n) + a ribonucleoside 5'-triphosphate = RNA(n+1) + diphosphate. Its function is as follows. DNA-dependent RNA polymerase catalyzes the transcription of DNA into RNA using the four ribonucleoside triphosphates as substrates. The protein is DNA-directed RNA polymerase subunit beta' of Staphylococcus saprophyticus subsp. saprophyticus (strain ATCC 15305 / DSM 20229 / NCIMB 8711 / NCTC 7292 / S-41).